A 336-amino-acid polypeptide reads, in one-letter code: Protein-glutamate methylesterase/protein-glutamine glutaminase 3 (336 aa).

A Response regulatory domain is found at 2-119; it reads KIAIVNDMPM…PNPKEAAAPL (118 aa). At D53 the chain carries 4-aspartylphosphate. One can recognise a CheB-type methylesterase domain in the interval 147-336; it reads PARRDRLVAI…APRLVEVFTQ (190 aa). Active-site residues include S159, H186, and D279.

The protein belongs to the CheB family. In terms of processing, phosphorylated by CheA. Phosphorylation of the N-terminal regulatory domain activates the methylesterase activity.

Its subcellular location is the cytoplasm. It catalyses the reaction [protein]-L-glutamate 5-O-methyl ester + H2O = L-glutamyl-[protein] + methanol + H(+). It carries out the reaction L-glutaminyl-[protein] + H2O = L-glutamyl-[protein] + NH4(+). Functionally, involved in chemotaxis. Part of a chemotaxis signal transduction system that modulates chemotaxis in response to various stimuli. Catalyzes the demethylation of specific methylglutamate residues introduced into the chemoreceptors (methyl-accepting chemotaxis proteins or MCP) by CheR. Also mediates the irreversible deamidation of specific glutamine residues to glutamic acid. In Pseudomonas savastanoi pv. phaseolicola (strain 1448A / Race 6) (Pseudomonas syringae pv. phaseolicola (strain 1448A / Race 6)), this protein is Protein-glutamate methylesterase/protein-glutamine glutaminase 3.